Reading from the N-terminus, the 307-residue chain is Putative flagellar export/assembly protein LafU (307 aa).

The chain crosses the membrane as a helical span at residues 32–54; sequence AWKVAFADFTLAMMALFMTLWIV. A disordered region spans residues 87–108; that stretch reads SPSHPPKPATVAAPEETEKKAR. Residues 154-272 form the OmpA-like domain; that stretch reads LRVLIKDDQN…RIEIMVLTKS (119 aa).

It belongs to the MotB family.

It is found in the cell inner membrane. Functionally, part of the flagellar gene cluster Flag-2. However, the Flag-2 flagellar system could be inactive in strain 042 due to a frameshift in lfgC. This chain is Putative flagellar export/assembly protein LafU, found in Escherichia coli O44:H18 (strain 042 / EAEC).